The chain runs to 468 residues: Lipase 1 (468 aa).

A signal peptide spans 1 to 16 (MRGIAVFLAFISLIFA). N79 carries N-linked (GlcNAc...) asparagine glycosylation. Cysteines 112 and 285 form a disulfide. S196 (charge relay system) is an active-site residue. N-linked (GlcNAc...) asparagine glycosylation is found at N231 and N319. Residues D348 and H381 each act as charge relay system in the active site. A disulfide bond links C364 and C409. N-linked (GlcNAc...) asparagine glycosylation is found at N417, N422, and N451.

It belongs to the AB hydrolase superfamily. Lipase family. Class Lip subfamily.

Its subcellular location is the secreted. It carries out the reaction a triacylglycerol + H2O = a diacylglycerol + a fatty acid + H(+). Its function is as follows. Secreted lipase that is able to hydrolyze both the neutral triacylglycerols and the monopalmitate ester Tween 40, allowing the use of hydrolyzed products as carbon sources. Has broad lipolytic activity, which may be important for colonization and subsequent infection, therefore contributing to the persistence and virulence in human tissue. The chain is Lipase 1 from Candida albicans (strain SC5314 / ATCC MYA-2876) (Yeast).